A 773-amino-acid chain; its full sequence is Cadherin-5 (773 aa).

The N-terminal stretch at 1 to 18 (MKKLILLFSLFLAPAFSY) is a signal peptide. The propeptide occupies 19 to 40 (KENQKINQNFSSNNTSHKRLKR). N-linked (GlcNAc...) asparagine glycans are attached at residues Asn27, Asn31, and Asn32. Cadherin domains follow at residues 39–144 (KRDW…APIF), 145–251 (VQKI…FPVF), 252–366 (KHPS…PPVF), 367–474 (TKLS…APEL), and 474–582 (LVYP…DFTF). Residues 41–595 (DWIWNRMHIR…RAKQVGVSVQ (555 aa)) are Extracellular-facing. Ca(2+) is bound by residues Glu51, Glu52, Asp102, and Glu104. Residue Asn121 is glycosylated (N-linked (GlcNAc...) asparagine). Asp136, Ile137, Asn138, Asp139, and Asn140 together coordinate Ca(2+). Asn150 carries N-linked (GlcNAc...) asparagine glycosylation. Ca(2+) is bound by residues Asp170, Asp172, His179, and Asp224. N-linked (GlcNAc...) asparagine glycosylation is found at Asn263, Asn437, Asn519, and Asn531. The helical transmembrane segment at 596 to 617 (ALVAIFICIFTIIAVIALLILL) threads the bilayer. Topologically, residues 618-773 (RKRHKKDLSG…GSEPNEDFVY (156 aa)) are cytoplasmic.

In terms of processing, N-glycosylated. Post-translationally, O-glycosylated.

It localises to the cell junction. Its subcellular location is the adherens junction. The protein resides in the cell membrane. The protein localises to the cytoplasm. Its function is as follows. Cadherins are calcium-dependent cell adhesion proteins. They preferentially interact with themselves in a homophilic manner in connecting cells; cadherins may thus contribute to the sorting of heterogeneous cell types. This cadherin may play a important role in endothelial cell biology through control of the cohesion and organization of the intercellular junctions. Plays a role in coupling actin fibers to cell junctions in endothelial cells. Associates with CTNND1/p120-catenin to control CADH5 endocytosis. The chain is Cadherin-5 from Gallus gallus (Chicken).